A 120-amino-acid polypeptide reads, in one-letter code: uncharacterized protein (120 aa).

The chain crosses the membrane as a helical span at residues 40–62 (SFLTDALLNLIYILFFSSSVFNW).

The protein localises to the membrane. This is an uncharacterized protein from Saccharomyces cerevisiae (strain ATCC 204508 / S288c) (Baker's yeast).